A 440-amino-acid polypeptide reads, in one-letter code: Ribosomal protein uS12 methylthiotransferase RimO (440 aa).

The MTTase N-terminal domain occupies 6-116 (PKVGFVSLGC…VVTAVHEVVP (111 aa)). [4Fe-4S] cluster is bound by residues Cys15, Cys51, Cys80, Cys149, Cys153, and Cys156. Residues 135 to 373 (LTPRHYAYLK…MAHQQAISAA (239 aa)) enclose the Radical SAM core domain. A TRAM domain is found at 376 to 440 (QLKVGKEIEV…DEYDLWAEPV (65 aa)).

Belongs to the methylthiotransferase family. RimO subfamily. [4Fe-4S] cluster is required as a cofactor.

Its subcellular location is the cytoplasm. The enzyme catalyses L-aspartate(89)-[ribosomal protein uS12]-hydrogen + (sulfur carrier)-SH + AH2 + 2 S-adenosyl-L-methionine = 3-methylsulfanyl-L-aspartate(89)-[ribosomal protein uS12]-hydrogen + (sulfur carrier)-H + 5'-deoxyadenosine + L-methionine + A + S-adenosyl-L-homocysteine + 2 H(+). In terms of biological role, catalyzes the methylthiolation of an aspartic acid residue of ribosomal protein uS12. This Pseudomonas paraeruginosa (strain DSM 24068 / PA7) (Pseudomonas aeruginosa (strain PA7)) protein is Ribosomal protein uS12 methylthiotransferase RimO.